The primary structure comprises 812 residues: INO80 complex subunit D (812 aa).

Disordered stretches follow at residues 521–573 (NSRK…LCMP) and 581–600 (EVSS…ELPD). Positions 524–558 (KVQHHQQRKPRKKTKPPALTKKTKKKRRRGPRRPQ) are enriched in basic residues. Over residues 585–595 (IRSPSTPNLST) the composition is skewed to polar residues.

This sequence belongs to the INO80D family. As to quaternary structure, component of the chromatin-remodeling INO80 complex.

The protein localises to the nucleus. In terms of biological role, putative regulatory component of the chromatin remodeling INO80 complex which is involved in transcriptional regulation, DNA replication and probably DNA repair. The protein is INO80 complex subunit D of Xenopus laevis (African clawed frog).